The primary structure comprises 64 residues: MPKLKTNRGAAKRFKVKASGRISRARSNHSHILTKKDPKRKRRLRELTEVHASDAPMVRRMVAK.

Positions 1-44 (MPKLKTNRGAAKRFKVKASGRISRARSNHSHILTKKDPKRKRRL) are disordered. Residues 10-44 (AAKRFKVKASGRISRARSNHSHILTKKDPKRKRRL) show a composition bias toward basic residues.

This sequence belongs to the bacterial ribosomal protein bL35 family.

In Halorhodospira halophila (strain DSM 244 / SL1) (Ectothiorhodospira halophila (strain DSM 244 / SL1)), this protein is Large ribosomal subunit protein bL35.